We begin with the raw amino-acid sequence, 262 residues long: Acyl-[acyl-carrier-protein]--UDP-N-acetylglucosamine O-acyltransferase (262 aa).

The protein belongs to the transferase hexapeptide repeat family. LpxA subfamily. As to quaternary structure, homotrimer.

Its subcellular location is the cytoplasm. It carries out the reaction a (3R)-hydroxyacyl-[ACP] + UDP-N-acetyl-alpha-D-glucosamine = a UDP-3-O-[(3R)-3-hydroxyacyl]-N-acetyl-alpha-D-glucosamine + holo-[ACP]. It functions in the pathway glycolipid biosynthesis; lipid IV(A) biosynthesis; lipid IV(A) from (3R)-3-hydroxytetradecanoyl-[acyl-carrier-protein] and UDP-N-acetyl-alpha-D-glucosamine: step 1/6. Involved in the biosynthesis of lipid A, a phosphorylated glycolipid that anchors the lipopolysaccharide to the outer membrane of the cell. This Paracidovorax citrulli (strain AAC00-1) (Acidovorax citrulli) protein is Acyl-[acyl-carrier-protein]--UDP-N-acetylglucosamine O-acyltransferase.